The chain runs to 51 residues: Magnetosome protein Mms5 (51 aa).

Over 1–12 the chain is Lumenal; sequence MLSAKGVSLGLG. The tract at residues 9–16 is LG region; the sequence is LGLGLGLG. The helical transmembrane segment at 13–33 threads the bilayer; sequence LGLGAWGPVLLGVVGVAGAIA. The Cytoplasmic segment spans residues 34–51; the sequence is LYGYYKNRNAEPAAAEAV.

Belongs to the magnetosome MamD/Mms5 family. Post-translationally, seen in gels as a band of about 5 kDa, with an N-terminus that corresponds to residue 8, suggesting it may undergo N-terminal cleavage.

Its subcellular location is the magnetosome membrane. Its function is as follows. Might be involved in magnetite crystal growth. In Paramagnetospirillum magneticum (strain ATCC 700264 / AMB-1) (Magnetospirillum magneticum), this protein is Magnetosome protein Mms5.